A 368-amino-acid polypeptide reads, in one-letter code: ICEBs1 integrase (368 aa).

One can recognise a Core-binding (CB) domain in the interval 61 to 143 (VSFPTLISIY…SLSKIFDTAV (83 aa)). Positions 164–362 (KKMKFWRPEE…YPNKQKEMAD (199 aa)) constitute a Tyr recombinase domain. Residues R201, K239, H313, R316, and H339 contribute to the active site. The O-(3'-phospho-DNA)-tyrosine intermediate role is filled by Y349.

It belongs to the 'phage' integrase family.

Putative integrase that is involved in the insertion of the integrative and conjugative element ICEBs1. Required for the excision of ICEBs1 from the donor cell genome and subsequent integration in the recipient cell genome. Appears not to be transferred through the mating pore. Integration of ICEBs1 involves an attachment site in the chromosome, attB, and a site in the circular form of ICEBs1, attICEBs1. The sequence is that of ICEBs1 integrase (int) from Bacillus subtilis (strain 168).